The following is a 657-amino-acid chain: tRNA 5-methylaminomethyl-2-thiouridine biosynthesis bifunctional protein MnmC (657 aa).

Residues Met-1–Thr-238 are tRNA (mnm(5)s(2)U34)-methyltransferase. Residues Ile-265–Lys-657 are FAD-dependent cmnm(5)s(2)U34 oxidoreductase.

It in the N-terminal section; belongs to the methyltransferase superfamily. tRNA (mnm(5)s(2)U34)-methyltransferase family. The protein in the C-terminal section; belongs to the DAO family. FAD serves as cofactor.

The protein localises to the cytoplasm. The enzyme catalyses 5-aminomethyl-2-thiouridine(34) in tRNA + S-adenosyl-L-methionine = 5-methylaminomethyl-2-thiouridine(34) in tRNA + S-adenosyl-L-homocysteine + H(+). Catalyzes the last two steps in the biosynthesis of 5-methylaminomethyl-2-thiouridine (mnm(5)s(2)U) at the wobble position (U34) in tRNA. Catalyzes the FAD-dependent demodification of cmnm(5)s(2)U34 to nm(5)s(2)U34, followed by the transfer of a methyl group from S-adenosyl-L-methionine to nm(5)s(2)U34, to form mnm(5)s(2)U34. The chain is tRNA 5-methylaminomethyl-2-thiouridine biosynthesis bifunctional protein MnmC from Pseudomonas putida (strain W619).